The following is a 292-amino-acid chain: 33 kDa chaperonin (292 aa).

Cystine bridges form between cysteine 236–cysteine 238 and cysteine 269–cysteine 272.

It belongs to the HSP33 family. Under oxidizing conditions two disulfide bonds are formed involving the reactive cysteines. Under reducing conditions zinc is bound to the reactive cysteines and the protein is inactive.

Its subcellular location is the cytoplasm. Redox regulated molecular chaperone. Protects both thermally unfolding and oxidatively damaged proteins from irreversible aggregation. Plays an important role in the bacterial defense system toward oxidative stress. The polypeptide is 33 kDa chaperonin (Ruminiclostridium cellulolyticum (strain ATCC 35319 / DSM 5812 / JCM 6584 / H10) (Clostridium cellulolyticum)).